The chain runs to 271 residues: Mannosyl-3-phosphoglycerate phosphatase (271 aa).

The active-site Nucleophile is the D13. Mg(2+) is bound by residues D13, D15, and D214.

Belongs to the HAD-like hydrolase superfamily. MPGP family. The cofactor is Mg(2+).

It localises to the cytoplasm. The catalysed reaction is 2-O-(alpha-D-mannosyl)-3-phosphoglycerate + H2O = (2R)-2-O-(alpha-D-mannosyl)-glycerate + phosphate. In Shigella dysenteriae serotype 1 (strain Sd197), this protein is Mannosyl-3-phosphoglycerate phosphatase (yedP).